The sequence spans 214 residues: Probable transaldolase (214 aa).

Lysine 83 (schiff-base intermediate with substrate) is an active-site residue.

This sequence belongs to the transaldolase family. Type 3B subfamily.

The protein localises to the cytoplasm. It catalyses the reaction D-sedoheptulose 7-phosphate + D-glyceraldehyde 3-phosphate = D-erythrose 4-phosphate + beta-D-fructose 6-phosphate. The protein operates within carbohydrate degradation; pentose phosphate pathway; D-glyceraldehyde 3-phosphate and beta-D-fructose 6-phosphate from D-ribose 5-phosphate and D-xylulose 5-phosphate (non-oxidative stage): step 2/3. In terms of biological role, transaldolase is important for the balance of metabolites in the pentose-phosphate pathway. The sequence is that of Probable transaldolase from Streptococcus pyogenes serotype M2 (strain MGAS10270).